The chain runs to 252 residues: MKVKVYNMDGSEKGETELSAVFETEYRPDLIKRAFLSSFTARLQPKGVDLMAGKRTSAKSIGKGHGRARVQRTGQGAGAFVPQAVGGRRCHPPKVEKILHERVNKKERLKALASAIAASANIEMVKNRGHVVETVPSVPLIVSDDFESLKKTKEVLETFKNLGLDGDVQRAKDGIKIRSGIGKLRGRKYRKPKSVLVVVSGACDAVKASKNLPGVDVISANDLGVMHIAPGADSGRLTLWTESAVEEINKRF.

This sequence belongs to the universal ribosomal protein uL4 family. As to quaternary structure, part of the 50S ribosomal subunit.

Functionally, one of the primary rRNA binding proteins, this protein initially binds near the 5'-end of the 23S rRNA. It is important during the early stages of 50S assembly. It makes multiple contacts with different domains of the 23S rRNA in the assembled 50S subunit and ribosome. Its function is as follows. Forms part of the polypeptide exit tunnel. This is Large ribosomal subunit protein uL4 from Methanococcus aeolicus (strain ATCC BAA-1280 / DSM 17508 / OCM 812 / Nankai-3).